Here is a 134-residue protein sequence, read N- to C-terminus: FK506-binding protein 2 (134 aa).

The signal sequence occupies residues 1–19 (MRFSIFSTLLVSLATLSTA). The PPIase FKBP-type domain maps to 39-127 (GDTVQMHYKG…IFETELVGID (89 aa)). Positions 131–134 (KDEL) match the Prevents secretion from ER motif.

The protein belongs to the FKBP-type PPIase family. FKBP2 subfamily.

Its subcellular location is the endoplasmic reticulum. It catalyses the reaction [protein]-peptidylproline (omega=180) = [protein]-peptidylproline (omega=0). With respect to regulation, inhibited by both FK506 and rapamycin. Its function is as follows. PPIases accelerate the folding of proteins. It catalyzes the cis-trans isomerization of proline imidic peptide bonds in oligopeptides. In Aspergillus oryzae (strain ATCC 42149 / RIB 40) (Yellow koji mold), this protein is FK506-binding protein 2 (fpr2).